The following is a 376-amino-acid chain: N,N'-diacetylbacillosaminyl-diphospho-undecaprenol alpha-1,3-N-acetylgalactosaminyltransferase (376 aa).

Belongs to the glycosyltransferase group 1 family.

It catalyses the reaction N,N'-diacetyl-alpha-D-bacillosaminyl-tri-trans,hepta-cis-undecaprenyl diphosphate + UDP-N-acetyl-alpha-D-galactosamine = N-acetyl-alpha-D-galactosaminyl-(1-&gt;3)-N,N'-diacetyl-alpha-D-bacillosaminyl-tri-trans,hepta-cis-undecaprenyl diphosphate + UDP + H(+). It functions in the pathway protein modification; protein glycosylation. Functionally, adds the first GalNAc residue on to the isoprenoid-linked bacillosamine (2,4-diacetamido-2,4,6-trideoxyglucose) carrier in the N-linked protein glycosylation pathway. Acts first on the undecaprenylpyrophosphate-linked bacillosamine (Und-PP-Bac) substrate to yield the disaccharide. This chain is N,N'-diacetylbacillosaminyl-diphospho-undecaprenol alpha-1,3-N-acetylgalactosaminyltransferase (pglA), found in Campylobacter jejuni subsp. jejuni serotype O:2 (strain ATCC 700819 / NCTC 11168).